The chain runs to 99 residues: Large ribosomal subunit protein bL27 (99 aa).

Residues 13–65 (AHHKGGGSTTNGRNSAGRRLGAKRADGQEVHAGSIIYRQRGTKIHPGKNVGRG) form a disordered region.

The protein belongs to the bacterial ribosomal protein bL27 family.

The sequence is that of Large ribosomal subunit protein bL27 from Lactobacillus delbrueckii subsp. bulgaricus (strain ATCC BAA-365 / Lb-18).